A 1072-amino-acid polypeptide reads, in one-letter code: Neurofilament heavy polypeptide (1072 aa).

Phosphoserine is present on S74. The IF rod domain maps to 94–409; that stretch reads EKEQLQALND…KLLEGEECRI (316 aa). Coiled-coil stretches lie at residues 98 to 132, 174 to 222, and 293 to 380; these read LQAL…LRQQ, IAHV…LQEE, and LDRL…QLRE. The 55 X 6 AA approximate tandem repeats of K-S-P-[VAGSE]-[KEVTSGA]-[EAVK] stretch occupies residues 278–643; that stretch reads TVQSTLQSEE…AKSPAEAKSP (366 aa). Phosphoserine is present on residues S343, S414, and S417. The tract at residues 454 to 1072 is disordered; that stretch reads EEQTEEIQVT…PEDKAAKGDK (619 aa). Residues 455 to 487 show a composition bias toward acidic residues; the sequence is EQTEEIQVTEEVTEEEDKEAQGEEEEEAEEGGE. The span at 488–499 shows a compositional bias: low complexity; it reads EAATTSPPAEEA. The residue at position 501 (S501) is a Phosphoserine. Positions 501-584 are enriched in basic and acidic residues; sequence SPEKETKSPV…KSPAEAKSPA (84 aa). 36 consecutive repeat copies span residues 507–512, 515–520, 521–526, 527–532, 533–538, 539–544, 545–550, 551–556, 557–562, 563–568, 569–574, 575–580, 581–586, 587–592, 593–598, 599–604, 605–610, 611–616, 617–622, 623–628, 629–634, 635–640, 641–646, 647–652, 653–658, 659–664, 665–670, 671–676, 677–682, 683–688, 689–694, 695–700, 701–706, 707–712, 713–718, and 719–724. S516, S522, S528, S534, S540, S546, S552, S558, S564, S570, S576, S582, S588, S594, S600, S606, S612, S618, S624, S627, S630, S636, S642, S648, S654, S660, S666, S672, S678, S684, S687, S690, S696, S702, S708, S714, and S720 each carry phosphoserine. Positions 600–620 are enriched in basic and acidic residues; that stretch reads SPAEAKSPAEVKSPVEAKSPA. Low complexity predominate over residues 621–631; the sequence is EAKSPASVKSP. Basic and acidic residues predominate over residues 720–774; the sequence is SPAEAKPPAEAKSPAEAKSPAEAKSPAEAKSPAEAKSPVEVKSPEKAKSPVKEGA. The 37; approximate repeat unit spans residues 725-730; it reads KPPAEA. 7 repeat units span residues 731-736, 737-742, 743-748, 749-754, 755-760, 761-766, and 767-772. Phosphoserine occurs at positions 732, 738, 744, 750, 756, and 762. The stretch at 775 to 780 is one 45; approximate repeat; sequence KSLAEA. 3 positions are modified to phosphoserine: S776, S782, and S788. A run of 2 repeats spans residues 781–786 and 787–792. 2 stretches are compositionally biased toward basic and acidic residues: residues 781 to 953 and 963 to 1072; these read KSPE…KAAA and GVKE…KGDK. The 48; approximate repeat unit spans residues 795 to 800; the sequence is KPPAEV. A run of 4 repeats spans residues 801 to 806, 807 to 812, 815 to 820, and 826 to 831. Phosphoserine is present on residues S802, S808, S816, and S827. A Phosphothreonine modification is found at T832. Residues S846, S852, S860, S880, and S937 each carry the phosphoserine modification. 3 tandem repeats follow at residues 851 to 856, 859 to 864, and 879 to 884.

This sequence belongs to the intermediate filament family. As to quaternary structure, forms heterodimers with NEFL; which can further hetero-oligomerize (in vitro). Forms heterodimers with INA (in vitro). In terms of processing, there are a number of repeats of the tripeptide K-S-P, NFH is phosphorylated on a number of the serines in this motif. It is thought that phosphorylation of NFH results in the formation of interfilament cross bridges that are important in the maintenance of axonal caliber. Phosphorylation seems to play a major role in the functioning of the larger neurofilament polypeptides (NF-M and NF-H), the levels of phosphorylation being altered developmentally and coincidentally with a change in the neurofilament function. Post-translationally, phosphorylated in the head and rod regions by the PKC kinase PKN1, leading to the inhibition of polymerization. Expressed in the dorsal root ganglion neurons (at protein level). Expressed in cutaneous and muscular sensory neurons.

The protein localises to the cytoplasm. It is found in the cytoskeleton. Its subcellular location is the cell projection. It localises to the axon. Neurofilaments usually contain three intermediate filament proteins: NEFL, NEFM, and NEFH which are involved in the maintenance of neuronal caliber. NEFH has an important function in mature axons that is not subserved by the two smaller NEF proteins. May additionally cooperate with the neuronal intermediate filament proteins PRPH and INA to form neuronal filamentous networks. The polypeptide is Neurofilament heavy polypeptide (Nefh) (Rattus norvegicus (Rat)).